A 169-amino-acid polypeptide reads, in one-letter code: MTRVPARSGRHDEQTLLRTIATTPRAPVGVRGDLATAIDALRRPERRRGMAVIISDFLGPINWQRPLGAIAARHEVLAIEVLDPRDVELPDIGDVVLQDAETGVTREFTIDAQLRDDFAKAAAAHRADVARTIRSCGAPILTLRTDRDWIADIVRFVKSRRRGALAGRQ.

To M.tuberculosis Rv1480.

This is an uncharacterized protein from Mycobacterium avium.